A 453-amino-acid polypeptide reads, in one-letter code: MSEHTRKSFSDLGISPWLIDTLKALAIYEPTDIQEGVIAQILEGRNCIGGAKTGSGKTAAFALPIIEKWSKDPSGIFALILTPTRELAIQIDEQFAALGANLNLKHALIVGGMDMIRQSIDLSKRPHVVVATPGRLADLIRSNGEETIAGLRRIKFLVMDEADRLLSPTFADDLDDCFSVLPASEDRQTLLFTATVTDAIRQLKYQPQKNNKPPLWLYEVETDNISVPSTLQQSYIFVSSQVREAYLVHLLTIPENAKKSAIIFVNRTRTAELIYSILRLLELRVTELHSEMVQRERINSLGRFRAEAAKILVATDVASRGLDIPSVQLVINFDLPRDPDDYIHRVGRTARAGRSGESISIVTERDVDLVHAIEDRVGTKLSEYEHVSENKMLEYIKEVTDAKRQASLEMIDRGFGERRQKRNEKRLMANGISNKLKNSGRKKKAKNTLSTEK.

The short motif at 7-35 (KSFSDLGISPWLIDTLKALAIYEPTDIQE) is the Q motif element. The 177-residue stretch at 38-214 (IAQILEGRNC…YQPQKNNKPP (177 aa)) folds into the Helicase ATP-binding domain. 51–58 (AKTGSGKT) lines the ATP pocket. Residues 160–163 (DEAD) carry the DEAD box motif. The 164-residue stretch at 230–393 (TLQQSYIFVS…YEHVSENKML (164 aa)) folds into the Helicase C-terminal domain. The disordered stretch occupies residues 413–453 (RGFGERRQKRNEKRLMANGISNKLKNSGRKKKAKNTLSTEK).

It belongs to the DEAD box helicase family. DDX49/DBP8 subfamily.

The protein localises to the nucleus. Its subcellular location is the nucleolus. The enzyme catalyses ATP + H2O = ADP + phosphate + H(+). Functionally, ATP-binding RNA helicase involved in 40S ribosomal subunit biogenesis and is required for the normal formation of 18S rRNAs through pre-rRNA processing at A0, A1 and A2 sites. Required for vegetative growth. This chain is ATP-dependent RNA helicase dbp8 (dbp8), found in Schizosaccharomyces pombe (strain 972 / ATCC 24843) (Fission yeast).